The following is a 341-amino-acid chain: Phosphoribosylformylglycinamidine cyclo-ligase (341 aa).

The protein belongs to the AIR synthase family.

It localises to the cytoplasm. It carries out the reaction 2-formamido-N(1)-(5-O-phospho-beta-D-ribosyl)acetamidine + ATP = 5-amino-1-(5-phospho-beta-D-ribosyl)imidazole + ADP + phosphate + H(+). It participates in purine metabolism; IMP biosynthesis via de novo pathway; 5-amino-1-(5-phospho-D-ribosyl)imidazole from N(2)-formyl-N(1)-(5-phospho-D-ribosyl)glycinamide: step 2/2. The sequence is that of Phosphoribosylformylglycinamidine cyclo-ligase from Synechococcus elongatus (strain ATCC 33912 / PCC 7942 / FACHB-805) (Anacystis nidulans R2).